The sequence spans 527 residues: NADH-ubiquinone oxidoreductase chain 5 (527 aa).

14 consecutive transmembrane segments (helical) span residues 3–23, 43–63, 75–95, 98–118, 141–161, 168–188, 197–217, 226–246, 263–283, 318–338, 357–377, 398–418, 432–452, and 507–527; these read ISIF…WLMP, FYFN…SVLV, FNYY…LNFS, IFTM…LVLF, FMFV…SFSM, LLLL…SWLP, VSSL…LMNF, FISF…LASL, MGFS…IHLV, LPNF…GLIF, YMMF…GYSF, VFMN…LWWM, VDFF…FLIL, and YLKS…FMIC.

Belongs to the complex I subunit 5 family.

It localises to the mitochondrion inner membrane. It catalyses the reaction a ubiquinone + NADH + 5 H(+)(in) = a ubiquinol + NAD(+) + 4 H(+)(out). Its function is as follows. Core subunit of the mitochondrial membrane respiratory chain NADH dehydrogenase (Complex I) that is believed to belong to the minimal assembly required for catalysis. Complex I functions in the transfer of electrons from NADH to the respiratory chain. The immediate electron acceptor for the enzyme is believed to be ubiquinone. This chain is NADH-ubiquinone oxidoreductase chain 5, found in Caenorhabditis elegans.